The primary structure comprises 37 residues: MIEPLLCGIVLGLIPVTLAGLFFAAYQQYKRGSQLEL.

The helical transmembrane segment at 5–25 (LLCGIVLGLIPVTLAGLFFAA) threads the bilayer.

It belongs to the PetG family. As to quaternary structure, the 4 large subunits of the cytochrome b6-f complex are cytochrome b6, subunit IV (17 kDa polypeptide, PetD), cytochrome f and the Rieske protein, while the 4 small subunits are PetG, PetL, PetM and PetN. The complex functions as a dimer.

It is found in the cellular thylakoid membrane. Component of the cytochrome b6-f complex, which mediates electron transfer between photosystem II (PSII) and photosystem I (PSI), cyclic electron flow around PSI, and state transitions. PetG is required for either the stability or assembly of the cytochrome b6-f complex. This is Cytochrome b6-f complex subunit 5 from Thermosynechococcus vestitus (strain NIES-2133 / IAM M-273 / BP-1).